The sequence spans 109 residues: Putative glutaredoxin-C11 (109 aa).

Residues 2–108 (AEMVARLASE…PLLKSAGALW (107 aa)) form the Glutaredoxin domain. A disulfide bond links C22 and C25. The Responsive for interaction with TGA factors signature appears at 106–109 (ALWL).

The protein belongs to the glutaredoxin family. CC-type subfamily.

The protein localises to the cytoplasm. It is found in the nucleus. In terms of biological role, has a glutathione-disulfide oxidoreductase activity in the presence of NADPH and glutathione reductase. Reduces low molecular weight disulfides and proteins. The chain is Putative glutaredoxin-C11 (GRXC11) from Oryza sativa subsp. japonica (Rice).